The primary structure comprises 399 residues: Acetate kinase (399 aa).

Mg(2+) is bound at residue N9. K16 serves as a coordination point for ATP. R90 contacts substrate. D147 acts as the Proton donor/acceptor in catalysis. Residues 207 to 211 (HLGNG), 281 to 283 (DFR), and 333 to 337 (GVGEN) contribute to the ATP site. E387 serves as a coordination point for Mg(2+).

Belongs to the acetokinase family. As to quaternary structure, homodimer. Mg(2+) serves as cofactor. It depends on Mn(2+) as a cofactor.

Its subcellular location is the cytoplasm. It catalyses the reaction acetate + ATP = acetyl phosphate + ADP. It functions in the pathway metabolic intermediate biosynthesis; acetyl-CoA biosynthesis; acetyl-CoA from acetate: step 1/2. In terms of biological role, catalyzes the formation of acetyl phosphate from acetate and ATP. Can also catalyze the reverse reaction. This Mycobacterium sp. (strain JLS) protein is Acetate kinase.